We begin with the raw amino-acid sequence, 361 residues long: uncharacterized protein (361 aa).

This is an uncharacterized protein from Methanothermobacter thermautotrophicus (Methanobacterium thermoformicicum).